The primary structure comprises 476 residues: RuvB-like helicase 2 (476 aa).

Residue G76–T83 coordinates ATP.

Belongs to the RuvB family. In terms of assembly, may form heterododecamers with RVB1. Component of the SWR1 chromatin remodeling complex, the INO80 chromatin remodeling complex, and of the R2TP complex.

The protein localises to the nucleus. The catalysed reaction is ATP + H2O = ADP + phosphate + H(+). Its function is as follows. DNA helicase which participates in several chromatin remodeling complexes, including the SWR1 and the INO80 complexes. The SWR1 complex mediates the ATP-dependent exchange of histone H2A for the H2A variant HZT1 leading to transcriptional regulation of selected genes by chromatin remodeling. The INO80 complex remodels chromatin by shifting nucleosomes and is involved in DNA repair. Also involved in pre-rRNA processing. In Candida glabrata (strain ATCC 2001 / BCRC 20586 / JCM 3761 / NBRC 0622 / NRRL Y-65 / CBS 138) (Yeast), this protein is RuvB-like helicase 2 (RVB2).